Reading from the N-terminus, the 236-residue chain is Alpha-acetolactate decarboxylase (236 aa).

It belongs to the alpha-acetolactate decarboxylase family.

It catalyses the reaction (2S)-2-acetolactate + H(+) = (R)-acetoin + CO2. The protein operates within polyol metabolism; (R,R)-butane-2,3-diol biosynthesis; (R,R)-butane-2,3-diol from pyruvate: step 2/3. In terms of biological role, converts acetolactate into acetoin. This chain is Alpha-acetolactate decarboxylase (aldB), found in Lactococcus lactis subsp. cremoris (strain MG1363).